The primary structure comprises 421 residues: MKKHSARVAPLSACNSPVLTLTKVEGEERPREPPGPAEAQAPAGTEAGGRTSRHNWTCSQERLKKVFWGVAVVFCVCASWAGSTQLARLTFKTFDAPFTLTWFATNWNFLFFPLYYAGHVCKSTEKQSMKQRYRECCRFFGDNGLTLKVFFTKAAPFGVLWTLTNYLYLHAIKKINATDVSVLFCCNKSFVFLLSWIVLRDRFMGVRIVAAILAIAGIVMMTYADGFHSHSVIGIALVVGSASMSALYKVLFKLLLGSAKFGEAALFLSILGVFNILFITCIPVILYFTRVEYWNSFDDIPWGNLCGFSILLLTFNIVLNFGIAVTYPTLMSLGIVLSVPVNAVVDHYTSQIVFNGVRVIAIIIIGLGFLLLLLPEEWDVWLIKLLTRLKVRKKEETAESSGDLGTGPQSRSRRARPSFAR.

Residues 25 to 53 (EGEERPREPPGPAEAQAPAGTEAGGRTSR) form a disordered region. The span at 37–49 (AEAQAPAGTEAGG) shows a compositional bias: low complexity. The next 10 helical transmembrane spans lie at 66-86 (VFWG…STQL), 98-118 (FTLT…YYAG), 149-169 (VFFT…YLYL), 179-199 (DVSV…WIVL), 208-228 (IVAA…DGFH), 232-252 (VIGI…KVLF), 266-286 (LFLS…PVIL), 305-325 (LCGF…GIAV), 326-346 (TYPT…AVVD), and 352-372 (IVFN…FLLL). The interval 394-421 (KEETAESSGDLGTGPQSRSRRARPSFAR) is disordered. A compositionally biased stretch (basic residues) spans 411–421 (RSRRARPSFAR).

This sequence belongs to the SLC35F solute transporter family.

The protein resides in the membrane. The catalysed reaction is thiamine(in) = thiamine(out). Functionally, mediates thiamine transport. In Mus musculus (Mouse), this protein is Solute carrier family 35 member F3 (Slc35f3).